The primary structure comprises 726 residues: Type VI secretion system spike protein VgrG1c (726 aa).

The disordered stretch occupies residues 502–522; the sequence is ANATQSGTKSRSSKGGTPANF. Positions 507–518 are enriched in low complexity; that stretch reads SGTKSRSSKGGT.

Belongs to the VgrG protein family. In terms of assembly, forms homomultimers. Part of the type VI secretion system (T6SS).

It localises to the secreted. In terms of biological role, part of the H1 type VI secretion system (H1-T6SS) specialized secretion system, which delivers several virulence factors in both prokaryotic and eukaryotic cells during infection. Allows the delivery of the Tse5/RhsP1 toxin to target cells where it exerts its toxicity. In Pseudomonas aeruginosa (strain ATCC 15692 / DSM 22644 / CIP 104116 / JCM 14847 / LMG 12228 / 1C / PRS 101 / PAO1), this protein is Type VI secretion system spike protein VgrG1c.